The following is a 512-amino-acid chain: Protein disulfide-isomerase (512 aa).

A signal peptide spans 1–24; it reads MAKNVAIFGLLFSLLLLVPSQIFA. Residues 25–144 enclose the Thioredoxin 1 domain; sequence EESSTDAKEF…IVEYLKKQSG (120 aa). Catalysis depends on nucleophile residues Cys62 and Cys65. A disulfide bridge links Cys62 with Cys65. N-linked (GlcNAc...) asparagine glycosylation is present at Asn278. Positions 357-485 constitute a Thioredoxin 2 domain; that stretch reads YKDGKVEPFV…IIEFIEKNKD (129 aa). Active-site nucleophile residues include Cys407 and Cys410. Cysteines 407 and 410 form a disulfide. A compositionally biased stretch (basic and acidic residues) spans 487-496; sequence TGAAHQEVEQ. Residues 487-512 are disordered; that stretch reads TGAAHQEVEQPKAAAQPEAEQPKDEL. The Prevents secretion from ER signature appears at 509 to 512; it reads KDEL.

It belongs to the protein disulfide isomerase family.

The protein resides in the endoplasmic reticulum lumen. The catalysed reaction is Catalyzes the rearrangement of -S-S- bonds in proteins.. In terms of biological role, participates in the folding of proteins containing disulfide bonds, may be involved in glycosylation, prolyl hydroxylation and triglyceride transfer. This is Protein disulfide-isomerase (PDI) from Medicago sativa (Alfalfa).